The sequence spans 347 residues: Putative [LysW]-L-2-aminoadipate/[LysW]-L-glutamate phosphate reductase (347 aa).

An NADP(+)-binding site is contributed by 9–12 (SGYI). Cysteine 149 is a catalytic residue. Residue asparagine 314 coordinates NADP(+).

This sequence belongs to the NAGSA dehydrogenase family. Type 1 subfamily. LysY sub-subfamily.

Its subcellular location is the cytoplasm. It carries out the reaction [amino-group carrier protein]-C-terminal-N-(1-carboxy-5-oxopentan-1-yl)-L-glutamine + phosphate + NADP(+) = [amino-group carrier protein]-C-terminal-N-(1-carboxy-5-phosphooxy-5-oxopentan-1-yl)-L-glutamine + NADPH + H(+). The enzyme catalyses [amino-group carrier protein]-C-terminal-gamma-(L-glutamyl-5-semialdehyde)-L-glutamate + phosphate + NADP(+) = [amino-group carrier protein]-C-terminal-gamma-(5-phospho-L-glutamyl)-L-glutamate + NADPH + H(+). The protein operates within amino-acid biosynthesis; L-lysine biosynthesis via AAA pathway; L-lysine from L-alpha-aminoadipate (Thermus route): step 3/5. It functions in the pathway amino-acid biosynthesis; L-arginine biosynthesis. Its function is as follows. Involved in both the arginine and lysine biosynthetic pathways. This is Putative [LysW]-L-2-aminoadipate/[LysW]-L-glutamate phosphate reductase from Picrophilus torridus (strain ATCC 700027 / DSM 9790 / JCM 10055 / NBRC 100828 / KAW 2/3).